The sequence spans 407 residues: Ameloblastin (407 aa).

The N-terminal stretch at 1 to 26 is a signal peptide; sequence MSASKIPLFKMKGLILFLSLVKMSLA. Pro-42 is subject to Hydroxyproline. Phosphoserine is present on Ser-48. Disordered regions lie at residues 124 to 143 and 259 to 304; these read GVQVTPQKPGPQPPMHPGQL and QNSP…ENPA.

This sequence belongs to the ameloblastin family. As to expression, ameloblast-specific.

It localises to the secreted. Its subcellular location is the extracellular space. The protein resides in the extracellular matrix. Involved in the mineralization and structural organization of enamel. This chain is Ameloblastin (Ambn), found in Mus musculus (Mouse).